We begin with the raw amino-acid sequence, 395 residues long: Major outer membrane porin, serovar F (395 aa).

Residues 1-22 form the signal peptide; it reads MKKLLKSVLVFAALSSASSLQA.

It belongs to the chlamydial porin (CP) (TC 1.B.2) family. In terms of assembly, part of a disulfide cross-linked outer membrane complex (COMC) composed of the major outer membrane porin (MOMP), the small cysteine-rich protein (OmcA) and the large cysteine-rich periplasmic protein (OmcB).

It localises to the cell outer membrane. Its function is as follows. In elementary bodies (EBs, the infectious stage, which is able to survive outside the host cell) provides the structural integrity of the outer envelope through disulfide cross-links with the small cysteine-rich protein and the large cysteine-rich periplasmic protein. It has been described in publications as the Sarkosyl-insoluble COMC (Chlamydia outer membrane complex), and serves as the functional equivalent of peptidoglycan. In terms of biological role, permits diffusion of specific solutes through the outer membrane. The protein is Major outer membrane porin, serovar F (ompA) of Chlamydia trachomatis.